We begin with the raw amino-acid sequence, 131 residues long: Small ribosomal subunit protein uS8 (131 aa).

Belongs to the universal ribosomal protein uS8 family. In terms of assembly, part of the 30S ribosomal subunit. Contacts proteins S5 and S12.

One of the primary rRNA binding proteins, it binds directly to 16S rRNA central domain where it helps coordinate assembly of the platform of the 30S subunit. The polypeptide is Small ribosomal subunit protein uS8 (Burkholderia multivorans (strain ATCC 17616 / 249)).